The chain runs to 459 residues: Trigger factor (459 aa).

In terms of domain architecture, PPIase FKBP-type spans 166–245; that stretch reads GDFANIDLTA…VNSVKAEELP (80 aa).

The protein belongs to the FKBP-type PPIase family. Tig subfamily.

Its subcellular location is the cytoplasm. The enzyme catalyses [protein]-peptidylproline (omega=180) = [protein]-peptidylproline (omega=0). Involved in protein export. Acts as a chaperone by maintaining the newly synthesized protein in an open conformation. Functions as a peptidyl-prolyl cis-trans isomerase. The polypeptide is Trigger factor (Bifidobacterium longum (strain NCC 2705)).